A 145-amino-acid chain; its full sequence is MAHLTLSIRGLLLALMSVLLISVAQLSMKWGMGTLNQLWSDLVMLWQGEDYSSLFSQALAPVMAVGAGLFCYALSMACWVMALKRLPLSIAYPLLSLSYVLVYLGAVYLPWLNEPLSWVKGTGIFLILLGLIFVLPKKNQTSDKS.

Residues 1–3 (MAH) lie on the Cytoplasmic side of the membrane. A helical membrane pass occupies residues 4–24 (LTLSIRGLLLALMSVLLISVA). Topologically, residues 25–61 (QLSMKWGMGTLNQLWSDLVMLWQGEDYSSLFSQALAP) are periplasmic. A helical membrane pass occupies residues 62-82 (VMAVGAGLFCYALSMACWVMA). Over 83-89 (LKRLPLS) the chain is Cytoplasmic. The helical transmembrane segment at 90–110 (IAYPLLSLSYVLVYLGAVYLP) threads the bilayer. Over 111-114 (WLNE) the chain is Periplasmic. Residues 115 to 135 (PLSWVKGTGIFLILLGLIFVL) form a helical membrane-spanning segment. The Cytoplasmic portion of the chain corresponds to 136 to 145 (PKKNQTSDKS).

This sequence belongs to the ArnF family. Heterodimer of ArnE and ArnF.

It is found in the cell inner membrane. It participates in bacterial outer membrane biogenesis; lipopolysaccharide biosynthesis. Translocates 4-amino-4-deoxy-L-arabinose-phosphoundecaprenol (alpha-L-Ara4N-phosphoundecaprenol) from the cytoplasmic to the periplasmic side of the inner membrane. The polypeptide is Probable 4-amino-4-deoxy-L-arabinose-phosphoundecaprenol flippase subunit ArnF (Shewanella sediminis (strain HAW-EB3)).